The chain runs to 365 residues: uncharacterized protein (365 aa).

Basic and acidic residues-rich tracts occupy residues 1–27 (MDNVQEHDPDTQEHNNETQNHKQEDHS) and 315–339 (AKDDEQYAKRLAKEEEERGKKETPK). 2 disordered regions span residues 1–31 (MDNVQEHDPDTQEHNNETQNHKQEDHSNSYQ) and 308–365 (KEEK…CLIS). Polar residues predominate over residues 340–353 (KASNTPRRNKSNTQ).

It to yeast YGL082w. Interacts with sad1.

It is found in the cytoplasm. This is an uncharacterized protein from Schizosaccharomyces pombe (strain 972 / ATCC 24843) (Fission yeast).